The sequence spans 223 residues: UPF0502 protein Sbal_1765 (223 aa).

This sequence belongs to the UPF0502 family.

The sequence is that of UPF0502 protein Sbal_1765 from Shewanella baltica (strain OS155 / ATCC BAA-1091).